The following is a 201-amino-acid chain: MILITYTKPLSKLIGHFEKFPGIGPRTAQRLALFILKQPESTIRDFSEALLEAHSNVGRCKKCFNLTSEDECEICKNTQRNQKLICVVAETKDLLALERAREFKGVYHVIGGLISPMDSVGPELLEIRSLVERVSKSEIDEIILALTPSVEGDTTSLYIGKLLAPFTKVTRIAYGLPMGSELEYVDEVTLARALEGRTNLN.

The C4-type zinc finger occupies 60–75; sequence CKKCFNLTSEDECEIC. In terms of domain architecture, Toprim spans 83–177; that stretch reads KLICVVAETK…KVTRIAYGLP (95 aa).

Belongs to the RecR family.

May play a role in DNA repair. It seems to be involved in an RecBC-independent recombinational process of DNA repair. It may act with RecF and RecO. This is Recombination protein RecR from Prochlorococcus marinus (strain MIT 9215).